The following is a 45-amino-acid chain: Large ribosomal subunit protein bL34 (45 aa).

This sequence belongs to the bacterial ribosomal protein bL34 family.

In Kineococcus radiotolerans (strain ATCC BAA-149 / DSM 14245 / SRS30216), this protein is Large ribosomal subunit protein bL34.